Consider the following 430-residue polypeptide: DD-carboxypeptidase/endopeptidase Mpg (430 aa).

3 residues coordinate Zn(2+): H295, D299, and H375.

It belongs to the peptidase M23B family. Monomer. Requires Zn(2+) as cofactor. In terms of processing, likely to be synthesized as a proenzyme. The cleavage of the N-terminal domain is probably required for the activation of the enzyme.

It localises to the cell outer membrane. Has both endopeptidase and DD-carboxypeptidase activities. Degrades cell wall peptidoglycan (PG) to allow consummate expression of pili. The polypeptide is DD-carboxypeptidase/endopeptidase Mpg (Neisseria meningitidis serogroup B (strain ATCC 13091 / M2091)).